The primary structure comprises 801 residues: Transferrin receptor protein 2 (801 aa).

The Cytoplasmic segment spans residues 1–83 (MERLWGLFQR…WAAAGRRAAP (83 aa)). The segment at 16–45 (PRSSQTVYQRVEGPRKGHLEEEEEDGEEGA) is disordered. An Endocytosis signal motif is present at residues 23-26 (YQRV). Residues 35 to 45 (EEEEEDGEEGA) are compositionally biased toward acidic residues. A helical; Signal-anchor for type II membrane protein transmembrane segment spans residues 84-104 (YLVLTALLIFTGAFLLGYVAF). Residues 105-801 (RGSCQACGDS…GDVWNIDNNF (697 aa)) lie on the Extracellular side of the membrane. N-linked (GlcNAc...) asparagine glycans are attached at residues Asn-240, Asn-339, Asn-540, and Asn-754.

It belongs to the peptidase M28 family. M28B subfamily. Homodimer. In terms of tissue distribution, predominantly expressed in liver. While the alpha form is also expressed in spleen, lung, muscle, prostate and peripheral blood mononuclear cells, the beta form is expressed in all tissues tested, albeit weakly.

It is found in the cell membrane. It localises to the cytoplasm. Functionally, mediates cellular uptake of transferrin-bound iron in a non-iron dependent manner. May be involved in iron metabolism, hepatocyte function and erythrocyte differentiation. This is Transferrin receptor protein 2 (TFR2) from Homo sapiens (Human).